We begin with the raw amino-acid sequence, 162 residues long: Ribosome-binding factor A (162 aa).

The tract at residues 124-162 (ARVRSGAKPAGEADPYRESGSGVEPGRDGSIGDDDQPEY) is disordered.

It belongs to the RbfA family. In terms of assembly, monomer. Binds 30S ribosomal subunits, but not 50S ribosomal subunits or 70S ribosomes.

The protein localises to the cytoplasm. One of several proteins that assist in the late maturation steps of the functional core of the 30S ribosomal subunit. Associates with free 30S ribosomal subunits (but not with 30S subunits that are part of 70S ribosomes or polysomes). Required for efficient processing of 16S rRNA. May interact with the 5'-terminal helix region of 16S rRNA. The sequence is that of Ribosome-binding factor A from Mycolicibacterium paratuberculosis (strain ATCC BAA-968 / K-10) (Mycobacterium paratuberculosis).